The primary structure comprises 551 residues: CTP synthase (551 aa).

Positions 1 to 267 (MPKYVFVTGG…GRYVMEHLGW (267 aa)) are amidoligase domain. Position 13 (Ser-13) interacts with CTP. Ser-13 provides a ligand contact to UTP. 14 to 19 (SVGKGI) provides a ligand contact to ATP. L-glutamine is bound at residue Tyr-54. Residue Asp-71 participates in ATP binding. Positions 71 and 141 each coordinate Mg(2+). CTP contacts are provided by residues 148–150 (DIE), 188–193 (KTKPTQ), and Lys-224. UTP contacts are provided by residues 188–193 (KTKPTQ) and Lys-224. In terms of domain architecture, Glutamine amidotransferase type-1 spans 292 to 532 (RIALVGKYVE…IGVAKHVLRE (241 aa)). Gly-353 is an L-glutamine binding site. Cys-380 serves as the catalytic Nucleophile; for glutamine hydrolysis. L-glutamine-binding positions include 381 to 384 (YGLH), Glu-404, and Arg-460. Catalysis depends on residues His-505 and Glu-507.

Belongs to the CTP synthase family. As to quaternary structure, homotetramer.

It catalyses the reaction UTP + L-glutamine + ATP + H2O = CTP + L-glutamate + ADP + phosphate + 2 H(+). It carries out the reaction L-glutamine + H2O = L-glutamate + NH4(+). The enzyme catalyses UTP + NH4(+) + ATP = CTP + ADP + phosphate + 2 H(+). The protein operates within pyrimidine metabolism; CTP biosynthesis via de novo pathway; CTP from UDP: step 2/2. Its activity is regulated as follows. Allosterically activated by GTP, when glutamine is the substrate; GTP has no effect on the reaction when ammonia is the substrate. The allosteric effector GTP functions by stabilizing the protein conformation that binds the tetrahedral intermediate(s) formed during glutamine hydrolysis. Inhibited by the product CTP, via allosteric rather than competitive inhibition. In terms of biological role, catalyzes the ATP-dependent amination of UTP to CTP with either L-glutamine or ammonia as the source of nitrogen. Regulates intracellular CTP levels through interactions with the four ribonucleotide triphosphates. This Thermomicrobium roseum (strain ATCC 27502 / DSM 5159 / P-2) protein is CTP synthase.